The sequence spans 145 residues: 3-hydroxyacyl-[acyl-carrier-protein] dehydratase FabZ (145 aa).

His-49 is a catalytic residue.

Belongs to the thioester dehydratase family. FabZ subfamily.

The protein resides in the cytoplasm. The catalysed reaction is a (3R)-hydroxyacyl-[ACP] = a (2E)-enoyl-[ACP] + H2O. In terms of biological role, involved in unsaturated fatty acids biosynthesis. Catalyzes the dehydration of short chain beta-hydroxyacyl-ACPs and long chain saturated and unsaturated beta-hydroxyacyl-ACPs. In Anaplasma phagocytophilum (strain HZ), this protein is 3-hydroxyacyl-[acyl-carrier-protein] dehydratase FabZ.